An 88-amino-acid chain; its full sequence is MAHKKGTGSTRNGRDSRAQRLGVKRYGGQTVTTGSILVRQRGTKVHPGNNVGRGGDDTLFALVDGIVKFEHYKRGRRKVSVYPADASA.

The disordered stretch occupies residues 1–21 (MAHKKGTGSTRNGRDSRAQRL).

The protein belongs to the bacterial ribosomal protein bL27 family.

In Picosynechococcus sp. (strain ATCC 27264 / PCC 7002 / PR-6) (Agmenellum quadruplicatum), this protein is Large ribosomal subunit protein bL27.